The primary structure comprises 497 residues: MIELGQSYSTIQAMTKQKPLKSLRQRVKENQTPPNRSQNHLGILRPSFSQHSRERKMLHSTSWLDGLRGISATCVVVHHCTLQWFGWHIHEPWFPGQSFLKLPVIRLLISGSPHVYIFFVISGYSLSYKPLKLSRQGRFDEAASVLSSSIFRRHARLFVPTTIVTFFCAIMTQLNWYGKAEHMPGVAVPAWEPPHLDNIWAQLNNFAWNELLFMDPVGRTVAKGDPGEQVKQLHNPYDYVLWTLPVEFNSSMVLLMFLMAFSRVESRARMAFCLAMAVLFQCFFIYWALFLFFSGMLICDLRLELGEALSTRAPSKDTRSWSKHLFVRAIGVGCFVLSLCALSTPHLAFGGREAPGFVTLASMIPERFGDQLLMPIAAIGLVLTLDHHPFLQVLFTNSFAQYMGRISFALFLVHGPLLNTLGHALGRRFIALIGGDTEERYLVAISLTAMVFWLMTILLADFVYQYVDLASVQVSKWAYQRLLRTEEQPGKYEWKSR.

The N-linked (GlcNAc...) asparagine glycan is linked to N35. The next 9 helical transmembrane spans lie at 69-89, 107-127, 157-177, 241-261, 278-298, 329-349, 375-395, 406-426, and 443-463; these read GISATCVVVHHCTLQWFGWHI, LLISGSPHVYIFFVISGYSLS, LFVPTTIVTFFCAIMTQLNWY, LWTLPVEFNSSMVLLMFLMAF, VLFQCFFIYWALFLFFSGMLI, AIGVGCFVLSLCALSTPHLAF, PIAAIGLVLTLDHHPFLQVLF, ISFALFLVHGPLLNTLGHALG, and VAISLTAMVFWLMTILLADFV.

Belongs to the acyltransferase 3 family.

The protein localises to the membrane. The protein operates within mycotoxin biosynthesis. In terms of biological role, O-acetyltransferase; part of the 2 gene clusters that mediate the biosynthesis of fusicoccins, diterpene glucosides that display phytohormone-like activity and function as potent activators of plasma membrane H(+)-ATPases in plants by modifying 14-3-3 proteins and cause the plant disease constriction canker. The first step in the pathway is performed by the fusicoccadiene synthase PaFS that possesses both prenyl transferase and terpene cyclase activity, converting isopentenyl diphosphate and dimethylallyl diphosphate into geranylgeranyl diphosphate (GGDP) and successively converting GGDP into fusicocca-2,10(14)-diene, a precursor for fusicoccin H. The second step is the oxidation at the C-8 position by the cytochrome P450 monooxygenase PaP450-2 to yield fusicocca-2,10(14)-diene-8-beta-ol. The cytochrome P450 monooxygenase PaP450-1 then catalyzes the hydroxylation at the C-16 position to produce fusicocca-2,10(14)-diene-8-beta,16-diol. The dioxygenase fc-dox then catalyzes the 16-oxydation of fusicocca-2,10(14)-diene-8-beta,16-diol to yield an aldehyde (8-beta-hydroxyfusicocca-1,10(14)-dien-16-al). The short-chain dehydrogenase/reductase fc-sdr catalyzes the reduction of the aldehyde to yield fusicocca-1,10(14)-diene-8-beta,16-diol. The next step is the hydroxylation at C-9 performed by the cytochrome P450 monooxygenase PaP450-3 that leads to fusicoccin H aglycon which is glycosylated to fusicoccin H by the O-glycosyltransferase PaGT. Hydroxylation at C-12 by the cytochrome P450 monooxygenase PaP450-4 leads then to the production of fusicoccin Q and is followed by methylation by the O-methyltransferase PaMT to yield fusicoccin P. Fusicoccin P is further converted to fusicoccin J via prenylation by the O-glucose prenyltransferase PaPT. Cytochrome P450 monooxygenase PaP450-5 then performs hydroxylation at C-19 to yield dideacetyl-fusicoccin A which is acetylated to 3'-O-deacetyl-fusicoccin A by the O-acetyltransferase PaAT-2. Finally, a another acetylation by the O-acetyltransferase PaAT-1 yields fusicoccin A. The sequence is that of O-acetyltransferase PaAT-1 from Phomopsis amygdali (Fusicoccum amygdali).